Consider the following 440-residue polypeptide: MSPLEATIDPVWLIIVKVVILFVILLAWTIFNVWFERRVLAKMQNRIGPIMNSAWAGGVFQAVGDGLKLIFKEMLTPKGADKIVFNLAPVIAGIACFASWSVIPLGGQVSMFGHTTRLQITDVPVAVLFILAVASIGIYGVVLAGWSSAGTYSLLGSLRSSAQMISYEVAMGLSLVTVFIFSGSMSTSQIVESQANHLVVGGFDTHIAGHYWLLLIPSFVIYVITMFGESNRLPFDLPECESELVSGYITEYSGFPYGMYFLAEYINMATLSAVCTTLFLGGYRAPWPLNYFGVIDSGWWGLLWFFLKTQLVIFFFVWVRAAIPRFRYDHFMDLGWKVLIPVSLGWVLLVAAWRTVINQGWGRNPVFLVVVGVILVALIVWAFMGGKTDSTADEAPDEPFDAFAGGYPVPPLPHQVQAPLAGAATATTVARRDHDENGGL.

Transmembrane regions (helical) follow at residues 11-31 (VWLI…WTIF), 83-103 (IVFN…WSVI), 123-143 (VPVA…GVVL), 164-184 (MISY…FSGS), 207-227 (IAGH…ITMF), 261-281 (FLAE…LFLG), 299-319 (WWGL…FVWV), 331-351 (FMDL…LLVA), and 366-386 (VFLV…FMGG).

It belongs to the complex I subunit 1 family. In terms of assembly, NDH-1 is composed of 14 different subunits. Subunits NuoA, H, J, K, L, M, N constitute the membrane sector of the complex.

It localises to the cell membrane. The catalysed reaction is a quinone + NADH + 5 H(+)(in) = a quinol + NAD(+) + 4 H(+)(out). NDH-1 shuttles electrons from NADH, via FMN and iron-sulfur (Fe-S) centers, to quinones in the respiratory chain. The immediate electron acceptor for the enzyme in this species is believed to be ubiquinone. Couples the redox reaction to proton translocation (for every two electrons transferred, four hydrogen ions are translocated across the cytoplasmic membrane), and thus conserves the redox energy in a proton gradient. This subunit may bind ubiquinone. In Cutibacterium acnes (strain DSM 16379 / KPA171202) (Propionibacterium acnes), this protein is NADH-quinone oxidoreductase subunit H.